Consider the following 35-residue polypeptide: Kappa-theraphotoxin-Tb1c (35 aa).

3 disulfides stabilise this stretch: C3-C18, C10-C23, and C17-C30.

This sequence belongs to the neurotoxin 10 (Hwtx-1) family. 59 (Tltx) subfamily. Monomer. In terms of tissue distribution, expressed by the venom gland.

The protein localises to the secreted. Its function is as follows. Blocks Kv4.2/KCND2 voltage-gated potassium channels probably by shifting the voltage-dependence of channel activation to more depolarized potentials and by binding to the S3-S4 linker region of the voltage sensor domain. This chain is Kappa-theraphotoxin-Tb1c, found in Theraphosa blondi (Goliath birdeating spider).